Here is a 177-residue protein sequence, read N- to C-terminus: uncharacterized protein (177 aa).

Positions 1–27 (MSHSRRAAPTQDQCHTPGFPTSRETSG) are disordered.

This is an uncharacterized protein from Homo sapiens (Human).